A 313-amino-acid polypeptide reads, in one-letter code: MAKRVLLASPRGYCAGVDRAVIAVEKALERHGPPVYVRKQIVHNVHVVGSLEKKGAIFVDQVDQIPPGAVTIFSAHGVSPAVVHSANERGLQVIDATCPLVTKVHREVIRFSKAGYFILLIGHSGHEEVEGTSGHAPDRVLVVNSPDEADTIDVPHTDKLVWLSQTTLSVDETLETVKRLRLRFPHIQDPPSDDICYATQNRQAAVKKIAPLSDLVIVVGSANSSNSVRLVEVALENGAKAAVRLDYADELDPALLDKVDVVGVTSGASVPEILVRDLLEVLARAGYTKVESVQTAVEDLVFSLPKGLRESRK.

Cysteine 14 is a binding site for [4Fe-4S] cluster. Residues histidine 43 and histidine 76 each contribute to the (2E)-4-hydroxy-3-methylbut-2-enyl diphosphate site. Residues histidine 43 and histidine 76 each contribute to the dimethylallyl diphosphate site. Isopentenyl diphosphate contacts are provided by histidine 43 and histidine 76. Cysteine 98 is a binding site for [4Fe-4S] cluster. Histidine 126 provides a ligand contact to (2E)-4-hydroxy-3-methylbut-2-enyl diphosphate. Histidine 126 contacts dimethylallyl diphosphate. Histidine 126 lines the isopentenyl diphosphate pocket. The active-site Proton donor is the glutamate 128. Residue threonine 166 participates in (2E)-4-hydroxy-3-methylbut-2-enyl diphosphate binding. Cysteine 196 provides a ligand contact to [4Fe-4S] cluster. (2E)-4-hydroxy-3-methylbut-2-enyl diphosphate-binding residues include serine 224, serine 225, asparagine 226, and serine 269. Residues serine 224, serine 225, asparagine 226, and serine 269 each contribute to the dimethylallyl diphosphate site. Positions 224, 225, 226, and 269 each coordinate isopentenyl diphosphate.

Belongs to the IspH family. [4Fe-4S] cluster serves as cofactor.

It catalyses the reaction isopentenyl diphosphate + 2 oxidized [2Fe-2S]-[ferredoxin] + H2O = (2E)-4-hydroxy-3-methylbut-2-enyl diphosphate + 2 reduced [2Fe-2S]-[ferredoxin] + 2 H(+). The enzyme catalyses dimethylallyl diphosphate + 2 oxidized [2Fe-2S]-[ferredoxin] + H2O = (2E)-4-hydroxy-3-methylbut-2-enyl diphosphate + 2 reduced [2Fe-2S]-[ferredoxin] + 2 H(+). The protein operates within isoprenoid biosynthesis; dimethylallyl diphosphate biosynthesis; dimethylallyl diphosphate from (2E)-4-hydroxy-3-methylbutenyl diphosphate: step 1/1. It functions in the pathway isoprenoid biosynthesis; isopentenyl diphosphate biosynthesis via DXP pathway; isopentenyl diphosphate from 1-deoxy-D-xylulose 5-phosphate: step 6/6. In terms of biological role, catalyzes the conversion of 1-hydroxy-2-methyl-2-(E)-butenyl 4-diphosphate (HMBPP) into a mixture of isopentenyl diphosphate (IPP) and dimethylallyl diphosphate (DMAPP). Acts in the terminal step of the DOXP/MEP pathway for isoprenoid precursor biosynthesis. This Tropheryma whipplei (strain TW08/27) (Whipple's bacillus) protein is 4-hydroxy-3-methylbut-2-enyl diphosphate reductase.